The primary structure comprises 125 residues: Small ribosomal subunit protein eS25 (125 aa).

Residues 1–23 are compositionally biased toward basic and acidic residues; sequence MPPKDDKKKKDAGKSAKKDKDPV. The interval 1-38 is disordered; it reads MPPKDDKKKKDAGKSAKKDKDPVNKSGGKAKKKKWSKG. Basic residues predominate over residues 28–38; it reads GKAKKKKWSKG. The residue at position 43 (K43) is an N6-acetyllysine. At K52 the chain carries N6-acetyllysine; alternate. K52 is modified (N6-succinyllysine; alternate). 2 positions are modified to N6-acetyllysine: K60 and K66. Residue K94 is modified to N6-acetyllysine; alternate. At K94 the chain carries N6-succinyllysine; alternate.

The protein belongs to the eukaryotic ribosomal protein eS25 family. Component of the small ribosomal subunit.

The protein resides in the cytoplasm. Component of the small ribosomal subunit. The ribosome is a large ribonucleoprotein complex responsible for the synthesis of proteins in the cell. In Homo sapiens (Human), this protein is Small ribosomal subunit protein eS25 (RPS25).